We begin with the raw amino-acid sequence, 203 residues long: GTP cyclohydrolase-2 (203 aa).

49–53 (RIHSE) serves as a coordination point for GTP. Residues cysteine 54, cysteine 65, and cysteine 67 each coordinate Zn(2+). GTP-binding positions include glutamine 70, 92–94 (EGR), and threonine 114. The Proton acceptor role is filled by aspartate 126. The active-site Nucleophile is arginine 128. 2 residues coordinate GTP: threonine 149 and lysine 154.

This sequence belongs to the GTP cyclohydrolase II family. Zn(2+) serves as cofactor.

The enzyme catalyses GTP + 4 H2O = 2,5-diamino-6-hydroxy-4-(5-phosphoribosylamino)-pyrimidine + formate + 2 phosphate + 3 H(+). It participates in cofactor biosynthesis; riboflavin biosynthesis; 5-amino-6-(D-ribitylamino)uracil from GTP: step 1/4. Functionally, catalyzes the conversion of GTP to 2,5-diamino-6-ribosylamino-4(3H)-pyrimidinone 5'-phosphate (DARP), formate and pyrophosphate. The sequence is that of GTP cyclohydrolase-2 from Shewanella sp. (strain MR-4).